A 317-amino-acid chain; its full sequence is ADP-L-glycero-D-manno-heptose-6-epimerase (317 aa).

NADP(+) contacts are provided by residues 10–11 (FI), 31–32 (DD), Lys38, Lys53, 75–79 (QGACS), and Asn92. Catalysis depends on Tyr139, which acts as the Proton acceptor. Lys143 is an NADP(+) binding site. Residue Asn166 coordinates substrate. NADP(+)-binding residues include Val167 and Lys175. The Proton acceptor role is filled by Lys175. Residues Gly177, His184, 198–201 (FEGV), Arg211, and Tyr275 each bind substrate.

It belongs to the NAD(P)-dependent epimerase/dehydratase family. HldD subfamily. Homopentamer. The cofactor is NADP(+).

The enzyme catalyses ADP-D-glycero-beta-D-manno-heptose = ADP-L-glycero-beta-D-manno-heptose. It participates in nucleotide-sugar biosynthesis; ADP-L-glycero-beta-D-manno-heptose biosynthesis; ADP-L-glycero-beta-D-manno-heptose from D-glycero-beta-D-manno-heptose 7-phosphate: step 4/4. In terms of biological role, catalyzes the interconversion between ADP-D-glycero-beta-D-manno-heptose and ADP-L-glycero-beta-D-manno-heptose via an epimerization at carbon 6 of the heptose. The protein is ADP-L-glycero-D-manno-heptose-6-epimerase of Shewanella piezotolerans (strain WP3 / JCM 13877).